Reading from the N-terminus, the 44-residue chain is Protein PsbN (44 aa).

Residues 7 to 29 (VATVFVSCLVLSITGYSLYIGFG) traverse the membrane as a helical segment.

It belongs to the PsbN family.

It is found in the plastid. It localises to the chloroplast thylakoid membrane. Its function is as follows. May play a role in photosystem I and II biogenesis. In Nephroselmis olivacea (Green alga), this protein is Protein PsbN.